Consider the following 352-residue polypeptide: 4-hydroxy-2-oxovalerate aldolase (352 aa).

In terms of domain architecture, Pyruvate carboxyltransferase spans 13 to 265 (VRLTDTSLRD…KTGIDFFDIA (253 aa)). Position 21–22 (21–22 (RD)) interacts with substrate. Aspartate 22 contacts Mn(2+). Histidine 25 (proton acceptor) is an active-site residue. Substrate-binding residues include serine 175 and histidine 204. Residues histidine 204 and histidine 206 each coordinate Mn(2+). Tyrosine 295 lines the substrate pocket.

This sequence belongs to the 4-hydroxy-2-oxovalerate aldolase family.

It catalyses the reaction (S)-4-hydroxy-2-oxopentanoate = acetaldehyde + pyruvate. This chain is 4-hydroxy-2-oxovalerate aldolase, found in Mycolicibacterium paratuberculosis (strain ATCC BAA-968 / K-10) (Mycobacterium paratuberculosis).